The sequence spans 505 residues: Amidophosphoribosyltransferase (505 aa).

The active-site Nucleophile is Cys2. A Glutamine amidotransferase type-2 domain is found at 2-235; the sequence is CGIVGIVSQS…AGEAVYVTFD (234 aa). Mg(2+) contacts are provided by Thr306, Asp368, and Asp369. Residues 484–505 are disordered; sequence RNDNAKKKREKQASNLEIYNEQ. Over residues 496-505 the composition is skewed to polar residues; that stretch reads ASNLEIYNEQ.

The protein in the C-terminal section; belongs to the purine/pyrimidine phosphoribosyltransferase family. Requires Mg(2+) as cofactor.

It catalyses the reaction 5-phospho-beta-D-ribosylamine + L-glutamate + diphosphate = 5-phospho-alpha-D-ribose 1-diphosphate + L-glutamine + H2O. Its pathway is purine metabolism; IMP biosynthesis via de novo pathway; N(1)-(5-phospho-D-ribosyl)glycinamide from 5-phospho-alpha-D-ribose 1-diphosphate: step 1/2. Functionally, catalyzes the formation of phosphoribosylamine from phosphoribosylpyrophosphate (PRPP) and glutamine. The chain is Amidophosphoribosyltransferase from Haemophilus influenzae (strain ATCC 51907 / DSM 11121 / KW20 / Rd).